A 207-amino-acid polypeptide reads, in one-letter code: Protein N-terminal glutamine amidohydrolase (207 aa).

Residues Cys30, His83, and Asp99 contribute to the active site.

The protein belongs to the NTAQ1 family. Monomer.

It is found in the cytoplasm. The protein localises to the cytosol. It localises to the nucleus. It catalyses the reaction N-terminal L-glutaminyl-[protein] + H2O = N-terminal L-glutamyl-[protein] + NH4(+). Mediates the side-chain deamidation of N-terminal glutamine residues to glutamate, an important step in N-end rule pathway of protein degradation. Conversion of the resulting N-terminal glutamine to glutamate renders the protein susceptible to arginylation, polyubiquitination and degradation as specified by the N-end rule. Does not act on substrates with internal or C-terminal glutamine and does not act on non-glutamine residues in any position. Does not deaminate acetylated N-terminal glutamine. With the exception of proline, all tested second-position residues on substrate peptides do not greatly influence the activity. In contrast, a proline at position 2, virtually abolishes deamidation of N-terminal glutamine. The polypeptide is Protein N-terminal glutamine amidohydrolase (NTAQ1) (Bos taurus (Bovine)).